The chain runs to 239 residues: uncharacterized protein (239 aa).

Residues 13–66 enclose the HTH cro/C1-type domain; sequence IEYLVDKLNGPSEFARKTGVTLSTITRWRKGEADPSRSNLVKIAEVTGVSIEWL. The segment at residues 24–43 is a DNA-binding region (H-T-H motif); sequence SEFARKTGVTLSTITRWRKG.

This is an uncharacterized protein from Haemophilus influenzae (strain ATCC 51907 / DSM 11121 / KW20 / Rd).